Consider the following 665-residue polypeptide: Coiled-coil domain-containing protein 138 (665 aa).

At Thr48 the chain carries Phosphothreonine. Ser49 carries the post-translational modification Phosphoserine. Residues 198 to 323 (QQKFAEELQK…YEFMTIQRLK (126 aa)) are a coiled coil. Ser469 carries the post-translational modification Phosphoserine.

The polypeptide is Coiled-coil domain-containing protein 138 (CCDC138) (Macaca fascicularis (Crab-eating macaque)).